We begin with the raw amino-acid sequence, 105 residues long: Cell division protein FtsL (105 aa).

The Cytoplasmic segment spans residues 1 to 22; the sequence is MIGNERHGLVGVIGADLIRNAK. Residues 23 to 43 form a helical membrane-spanning segment; sequence IPLILLVAVLISAVLVVTTAH. Residues 44 to 105 are Periplasmic-facing; the sequence is RTRLLTAERE…DPSQENIVIK (62 aa).

The protein belongs to the FtsL family. As to quaternary structure, part of a complex composed of FtsB, FtsL and FtsQ.

Its subcellular location is the cell inner membrane. Functionally, essential cell division protein. May link together the upstream cell division proteins, which are predominantly cytoplasmic, with the downstream cell division proteins, which are predominantly periplasmic. The sequence is that of Cell division protein FtsL from Yersinia pestis.